The primary structure comprises 175 residues: Centrosomal protein 20 (175 aa).

Residues 1–104 (MATIAELKAV…IVEDANGKSV (104 aa)) form a necessary and sufficient for homooligomerization and localization to centrosomes and pericentriolar satellites region. Residues 49–81 (ENLLINELIREYLEFNKYKYSASVLTAEAGQPE) form the LisH domain. Residues 137 to 166 (RQNLAKPSTERNQKDRIPEPGRMAGTSIEE) form a disordered region. Over residues 144–155 (STERNQKDRIPE) the composition is skewed to basic and acidic residues.

Belongs to the CEP43 family. Homooligomer; probably required for localization to centrosomes.

The protein localises to the cell projection. Its subcellular location is the cilium. It localises to the cytoplasm. The protein resides in the cytoskeleton. It is found in the cilium basal body. The protein localises to the microtubule organizing center. Its subcellular location is the centrosome. It localises to the cytoplasmic granule. The protein resides in the centriolar satellite. In terms of biological role, involved in the biogenesis of cilia. Required for the recruitment of PLK1 to centrosomes and S phase progression. In Gallus gallus (Chicken), this protein is Centrosomal protein 20 (CEP20).